Reading from the N-terminus, the 113-residue chain is ATP-dependent Clp protease adapter protein ClpS (113 aa).

Belongs to the ClpS family. Binds to the N-terminal domain of the chaperone ClpA.

Functionally, involved in the modulation of the specificity of the ClpAP-mediated ATP-dependent protein degradation. The chain is ATP-dependent Clp protease adapter protein ClpS from Leptospira biflexa serovar Patoc (strain Patoc 1 / Ames).